Here is a 1004-residue protein sequence, read N- to C-terminus: Importin subunit beta-5 (1004 aa).

Residue methionine 1 is modified to N-acetylmethionine. The Importin N-terminal domain maps to 21–100; that stretch reads AETQLLQWCD…REVLLKLCLN (80 aa).

Belongs to the importin beta family. As to quaternary structure, interacts with NAP1.

The protein localises to the cytoplasm. It localises to the nucleus. Its subcellular location is the nuclear pore complex. Its function is as follows. Required for nuclear protein import and mediates docking of import substrate to distinct nucleoporins. Serves a receptor for nuclear localization signals. Mediates the nuclear import of TATA-binding protein (TBP) and of histones H2A and H2B. The sequence is that of Importin subunit beta-5 (KAP114) from Saccharomyces cerevisiae (strain ATCC 204508 / S288c) (Baker's yeast).